The sequence spans 299 residues: Adenylate kinase (299 aa).

Residues 1 to 30 (MATTTTRGARDSPFPAPSEGEIKKELNMKG) form a disordered region. An ATP-binding site is contributed by 85 to 90 (GAGKGT). The interval 107–136 (ATGDMLREQVSKQTELGKMAKKIMDQGGLV) is NMP. AMP is bound by residues threonine 108, arginine 113, 134–136 (GLV), 163–166 (GFPR), and glutamine 170. An LID region spans residues 204-241 (GRLVHPASGRSYHKEFSPPKKPMTDDVTGEPLIQRSDD). Residues arginine 205 and 214–215 (SY) each bind ATP. Residues 212–237 (GRSYHKEFSPPKKPMTDDVTGEPLIQ) are disordered. The span at 215–227 (YHKEFSPPKKPMT) shows a compositional bias: basic and acidic residues. Positions 238 and 249 each coordinate AMP. Glutamine 277 is an ATP binding site.

Belongs to the adenylate kinase family. AK2 subfamily. Monomer.

It is found in the cytoplasm. It localises to the cytosol. Its subcellular location is the mitochondrion intermembrane space. The enzyme catalyses AMP + ATP = 2 ADP. In terms of biological role, catalyzes the reversible transfer of the terminal phosphate group between ATP and AMP. Plays an important role in cellular energy homeostasis and in adenine nucleotide metabolism. Adenylate kinase activity is critical for regulation of the phosphate utilization and the AMP de novo biosynthesis pathways. The protein is Adenylate kinase of Mycosarcoma maydis (Corn smut fungus).